The primary structure comprises 140 residues: Putative pre-16S rRNA nuclease (140 aa).

Belongs to the YqgF nuclease family.

Its subcellular location is the cytoplasm. Functionally, could be a nuclease involved in processing of the 5'-end of pre-16S rRNA. This is Putative pre-16S rRNA nuclease from Endomicrobium trichonymphae.